Here is a 328-residue protein sequence, read N- to C-terminus: Probable nicotianamine synthase 6 (328 aa).

This sequence belongs to the nicotianamine synthase (NAS)-like family.

The catalysed reaction is 3 S-adenosyl-L-methionine = nicotianamine + 3 S-methyl-5'-thioadenosine + 3 H(+). Its function is as follows. Synthesizes nicotianamine, a polyamine that is the first intermediate in the synthesis of the phytosiderophores of the mugineic acid type found in gramineae which serves as a sensor for the physiological iron status within the plant, and/or might be involved in the transport of iron. The polypeptide is Probable nicotianamine synthase 6 (NAS6) (Hordeum vulgare (Barley)).